The sequence spans 274 residues: Dermonecrotic toxin SdSicTox-betaIIB2i (274 aa).

His5 is a catalytic residue. Mg(2+)-binding residues include Glu25 and Asp27. His41 functions as the Nucleophile in the catalytic mechanism. 2 cysteine pairs are disulfide-bonded: Cys45–Cys51 and Cys47–Cys190. Asp85 is a binding site for Mg(2+).

The protein belongs to the arthropod phospholipase D family. Class II subfamily. Requires Mg(2+) as cofactor. Expressed by the venom gland.

The protein localises to the secreted. It catalyses the reaction an N-(acyl)-sphingosylphosphocholine = an N-(acyl)-sphingosyl-1,3-cyclic phosphate + choline. The catalysed reaction is an N-(acyl)-sphingosylphosphoethanolamine = an N-(acyl)-sphingosyl-1,3-cyclic phosphate + ethanolamine. It carries out the reaction a 1-acyl-sn-glycero-3-phosphocholine = a 1-acyl-sn-glycero-2,3-cyclic phosphate + choline. The enzyme catalyses a 1-acyl-sn-glycero-3-phosphoethanolamine = a 1-acyl-sn-glycero-2,3-cyclic phosphate + ethanolamine. Its function is as follows. Dermonecrotic toxins cleave the phosphodiester linkage between the phosphate and headgroup of certain phospholipids (sphingolipid and lysolipid substrates), forming an alcohol (often choline) and a cyclic phosphate. This toxin acts on sphingomyelin (SM). It may also act on ceramide phosphoethanolamine (CPE), lysophosphatidylcholine (LPC) and lysophosphatidylethanolamine (LPE), but not on lysophosphatidylserine (LPS), and lysophosphatidylglycerol (LPG). It acts by transphosphatidylation, releasing exclusively cyclic phosphate products as second products. Induces dermonecrosis, hemolysis, increased vascular permeability, edema, inflammatory response, and platelet aggregation. This Sicarius cf. damarensis (strain GJB-2008) (Six-eyed sand spider) protein is Dermonecrotic toxin SdSicTox-betaIIB2i.